Reading from the N-terminus, the 166-residue chain is MANNDQKRDEGYIEKLVQVNRVAKTVKGGRIFTFTALTVVGDGKGRVGFGRGKSREVPAAIQKAMEAARRNMIQVDLNGTTLQYPIKSAHGASKVYMQPASEGTGIIAGGAMRAVLEVAGVQNVLAKCYGSTNPVNVVHATFKGLKTMQSPESVAAKRGKSVEEIL.

The region spanning 12 to 75 (YIEKLVQVNR…EAARRNMIQV (64 aa)) is the S5 DRBM domain.

Belongs to the universal ribosomal protein uS5 family. As to quaternary structure, part of the 30S ribosomal subunit. Contacts proteins S4 and S8.

With S4 and S12 plays an important role in translational accuracy. Functionally, located at the back of the 30S subunit body where it stabilizes the conformation of the head with respect to the body. The polypeptide is Small ribosomal subunit protein uS5 (Ectopseudomonas mendocina (strain ymp) (Pseudomonas mendocina)).